The following is a 94-amino-acid chain: Large ribosomal subunit protein uL23 (94 aa).

The protein belongs to the universal ribosomal protein uL23 family. As to quaternary structure, part of the 50S ribosomal subunit. Contacts protein L29, and trigger factor when it is bound to the ribosome.

One of the early assembly proteins it binds 23S rRNA. One of the proteins that surrounds the polypeptide exit tunnel on the outside of the ribosome. Forms the main docking site for trigger factor binding to the ribosome. In Listeria innocua serovar 6a (strain ATCC BAA-680 / CLIP 11262), this protein is Large ribosomal subunit protein uL23.